We begin with the raw amino-acid sequence, 254 residues long: uncharacterized protein (254 aa).

Positions 1–22 are cleaved as a signal peptide; that stretch reads MKRLKKIVLCISFLFLTIFIGG. Cysteine 23 carries N-palmitoyl cysteine lipidation. The S-diacylglycerol cysteine moiety is linked to residue cysteine 23.

Belongs to the staphylococcal tandem lipoprotein family.

It is found in the cell membrane. This is an uncharacterized protein from Staphylococcus aureus (strain MSSA476).